The sequence spans 143 residues: Transcriptional regulator MraZ (143 aa).

2 consecutive SpoVT-AbrB domains span residues 5-47 (THSP…TTRE) and 76-119 (ANAE…DAGT).

Belongs to the MraZ family. In terms of assembly, forms oligomers.

The protein localises to the cytoplasm. It is found in the nucleoid. The polypeptide is Transcriptional regulator MraZ (Clavibacter michiganensis subsp. michiganensis (strain NCPPB 382)).